The sequence spans 459 residues: tRNA modification GTPase MnmE (459 aa).

Positions 29, 91, and 130 each coordinate (6S)-5-formyl-5,6,7,8-tetrahydrofolate. The region spanning 225–381 (GVKVAIVGRP…LEEALEQLVT (157 aa)) is the TrmE-type G domain. Asn235 contributes to the K(+) binding site. GTP contacts are provided by residues 235 to 240 (NVGKSS), 254 to 260 (TDLPGTT), and 279 to 282 (DTAG). Ser239 contributes to the Mg(2+) binding site. K(+)-binding residues include Thr254, Leu256, and Thr259. Thr260 contacts Mg(2+). Position 459 (Lys459) interacts with (6S)-5-formyl-5,6,7,8-tetrahydrofolate.

It belongs to the TRAFAC class TrmE-Era-EngA-EngB-Septin-like GTPase superfamily. TrmE GTPase family. In terms of assembly, homodimer. Heterotetramer of two MnmE and two MnmG subunits. The cofactor is K(+).

It is found in the cytoplasm. In terms of biological role, exhibits a very high intrinsic GTPase hydrolysis rate. Involved in the addition of a carboxymethylaminomethyl (cmnm) group at the wobble position (U34) of certain tRNAs, forming tRNA-cmnm(5)s(2)U34. The sequence is that of tRNA modification GTPase MnmE from Synechococcus sp. (strain JA-2-3B'a(2-13)) (Cyanobacteria bacterium Yellowstone B-Prime).